Consider the following 567-residue polypeptide: Potassium-transporting ATPase potassium-binding subunit (567 aa).

Transmembrane regions (helical) follow at residues 3 to 23 (MIGW…TKPL), 64 to 84 (LTYT…IYGV), 136 to 156 (GLTH…MALI), 179 to 199 (LYVL…QGIP), 220 to 240 (VGPV…GGFF), 254 to 274 (LSNF…TNVF), 285 to 305 (WAIL…TYWA), 330 to 350 (FGLV…CGAV), 374 to 394 (IIVG…VLAI), 420 to 440 (AMLA…VGVV), 488 to 508 (LASA…AIAG), and 527 to 547 (GGLF…LTFF).

It belongs to the KdpA family. In terms of assembly, the system is composed of three essential subunits: KdpA, KdpB and KdpC.

It is found in the cell inner membrane. Functionally, part of the high-affinity ATP-driven potassium transport (or Kdp) system, which catalyzes the hydrolysis of ATP coupled with the electrogenic transport of potassium into the cytoplasm. This subunit binds the periplasmic potassium ions and delivers the ions to the membrane domain of KdpB through an intramembrane tunnel. This is Potassium-transporting ATPase potassium-binding subunit from Bradyrhizobium diazoefficiens (strain JCM 10833 / BCRC 13528 / IAM 13628 / NBRC 14792 / USDA 110).